The sequence spans 421 residues: Gamma-glutamyl phosphate reductase (421 aa).

The protein belongs to the gamma-glutamyl phosphate reductase family.

Its subcellular location is the cytoplasm. It carries out the reaction L-glutamate 5-semialdehyde + phosphate + NADP(+) = L-glutamyl 5-phosphate + NADPH + H(+). Its pathway is amino-acid biosynthesis; L-proline biosynthesis; L-glutamate 5-semialdehyde from L-glutamate: step 2/2. Its function is as follows. Catalyzes the NADPH-dependent reduction of L-glutamate 5-phosphate into L-glutamate 5-semialdehyde and phosphate. The product spontaneously undergoes cyclization to form 1-pyrroline-5-carboxylate. The polypeptide is Gamma-glutamyl phosphate reductase (Pseudomonas aeruginosa (strain ATCC 15692 / DSM 22644 / CIP 104116 / JCM 14847 / LMG 12228 / 1C / PRS 101 / PAO1)).